The sequence spans 260 residues: ARL14 effector protein (260 aa).

M1 bears the N-acetylmethionine mark. Residue K177 forms a Glycyl lysine isopeptide (Lys-Gly) (interchain with G-Cter in SUMO2) linkage. Phosphoserine is present on S183.

Interacts with ARL14 and MYO1E.

The protein resides in the cytoplasm. Functionally, through its interaction with ARL14 and MYO1E, may connect MHC class II-containing cytoplasmic vesicles to the actin network and hence controls the movement of these vesicles along the actin cytoskeleton in dendritic cells. The chain is ARL14 effector protein (ARL14EP) from Bos taurus (Bovine).